Reading from the N-terminus, the 398-residue chain is Elongation factor Tu (398 aa).

The 198-residue stretch at 10-207 folds into the tr-type G domain; sequence KPHVNIGTIG…TVDEYIPEPE (198 aa). Residues 19–26 form a G1 region; sequence GHVDHGKT. GTP is bound at residue 19-26; sequence GHVDHGKT. Residue Thr-26 coordinates Mg(2+). The interval 63–67 is G2; it reads GITIN. The interval 84–87 is G3; the sequence is DAPG. GTP is bound by residues 84–88 and 139–142; these read DAPGH and NKVD. Residues 139 to 142 are G4; it reads NKVD. The interval 177 to 179 is G5; it reads SAL.

This sequence belongs to the TRAFAC class translation factor GTPase superfamily. Classic translation factor GTPase family. EF-Tu/EF-1A subfamily. Monomer.

The protein resides in the cytoplasm. The catalysed reaction is GTP + H2O = GDP + phosphate + H(+). In terms of biological role, GTP hydrolase that promotes the GTP-dependent binding of aminoacyl-tRNA to the A-site of ribosomes during protein biosynthesis. The protein is Elongation factor Tu of Streptococcus sanguinis (strain SK36).